The following is a 309-amino-acid chain: Mitochondrial import receptor subunit TOM34 (309 aa).

The residue at position 8 (Ser-8) is a Phosphoserine. TPR repeat units follow at residues 9 to 42 (VEQL…LQAR), 51 to 84 (SVLY…VPFS), and 85 to 118 (IKPL…DNSV). A disordered region spans residues 158–189 (WNSLPSDNHKETAKTKSKEATATKSRVPSAGD). Position 160 is a phosphoserine (Ser-160). The span at 164 to 178 (DNHKETAKTKSKEAT) shows a compositional bias: basic and acidic residues. Ser-186 is subject to Phosphoserine. TPR repeat units follow at residues 193–226 (AKAL…SSLE), 227–260 (SATY…DGKN), and 261–294 (VKAF…EPRN). Lys-197 participates in a covalent cross-link: Glycyl lysine isopeptide (Lys-Gly) (interchain with G-Cter in SUMO2).

Belongs to the Tom34 family. Interacts with HSP90A, VCP, ATP6V1D, KIAA0665, AMPK, and DMAP1 through its TPR repeat. In terms of tissue distribution, isoform 1 is ubiquitously expressed while isoform 2 is expressed only in mature testicular germ cells. Isoform 1 is expressed in all testicular cells. Isoform 2 is highly expressed in early to late pachytene cells but expression is significantly decreased in round spermatid cells.

The protein resides in the cytoplasm. Its subcellular location is the mitochondrion outer membrane. Functionally, plays a role in the import of cytosolically synthesized preproteins into mitochondria. Binds the mature portion of precursor proteins. Interacts with cellular components, and possesses weak ATPase activity. May be a chaperone-like protein that helps to keep newly synthesized precursors in an unfolded import compatible state. In Mus musculus (Mouse), this protein is Mitochondrial import receptor subunit TOM34 (Tomm34).